A 524-amino-acid polypeptide reads, in one-letter code: GMP synthase [glutamine-hydrolyzing] (524 aa).

One can recognise a Glutamine amidotransferase type-1 domain in the interval 10–199 (PVLVVDFGAQ…LTEVAGLEQT (190 aa)). Cysteine 87 acts as the Nucleophile in catalysis. Catalysis depends on residues histidine 173 and glutamate 175. In terms of domain architecture, GMPS ATP-PPase spans 200-398 (WTSANIAQQL…LGLPEEIVAR (199 aa)). Residue 228-234 (SGGVDSA) coordinates ATP.

As to quaternary structure, homodimer.

It catalyses the reaction XMP + L-glutamine + ATP + H2O = GMP + L-glutamate + AMP + diphosphate + 2 H(+). It participates in purine metabolism; GMP biosynthesis; GMP from XMP (L-Gln route): step 1/1. Catalyzes the synthesis of GMP from XMP. The chain is GMP synthase [glutamine-hydrolyzing] (guaA) from Corynebacterium ammoniagenes (Brevibacterium ammoniagenes).